A 25-amino-acid polypeptide reads, in one-letter code: Ranatuerin-1 (25 aa).

A disulfide bridge links Cys19 with Cys25.

Belongs to the frog skin active peptide (FSAP) family. Ranatuerin subfamily. Expressed by the skin glands.

The protein localises to the secreted. Its function is as follows. Antibacterial activity against Gram-positive bacterium S.aureus (MIC=50 uM) and Gram-negative bacterium E.coli (MIC=2 uM). Has activity against C.albicans (MIC=70 uM). Shows no detectable hemolytic activity towards human erythrocytes. The protein is Ranatuerin-1 of Aquarana catesbeiana (American bullfrog).